Reading from the N-terminus, the 289-residue chain is HTH-type transcriptional regulator HexR (289 aa).

Residues 1-77 (MNMLEKIQSQ…LHLAQSLANG (77 aa)) form the HTH rpiR-type domain. Residues 37-56 (IAAMALEANVSEPTVNRFCR) constitute a DNA-binding region (H-T-H motif). The SIS domain occupies 121-260 (AVDLLTQAKK…ATGFTLRRGA (140 aa)).

Its function is as follows. Represses the expression of the hex regulon (zwf, eda, glp and gap). The polypeptide is HTH-type transcriptional regulator HexR (hexR) (Escherichia coli (strain K12)).